The primary structure comprises 221 residues: Pectate lyase C (221 aa).

The N-terminal stretch at 1-27 is a signal peptide; that stretch reads MKKIVSILFMFGLVMGFSQFQPSTVFA.

It belongs to the polysaccharide lyase 3 family. Ca(2+) is required as a cofactor.

The protein localises to the secreted. It catalyses the reaction Eliminative cleavage of (1-&gt;4)-alpha-D-galacturonan to give oligosaccharides with 4-deoxy-alpha-D-galact-4-enuronosyl groups at their non-reducing ends.. The catalysed reaction is Eliminative cleavage of (1-&gt;4)-alpha-D-galacturonan methyl ester to give oligosaccharides with 4-deoxy-6-O-methyl-alpha-D-galact-4-enuronosyl groups at their non-reducing ends.. It participates in glycan metabolism; pectin degradation; 2-dehydro-3-deoxy-D-gluconate from pectin: step 2/5. Its function is as follows. Catalyzes the depolymerization of both polygalacturonate and pectins of methyl esterification degree from 22 to 89%, with an endo mode of action. In contrast to the majority of pectate lyases, displays high activity on highly methylated pectins. Is also able to cleave trigalacturonate to galacturonic acid and unsaturated digalacturonate. This is Pectate lyase C (pelC) from Bacillus subtilis (strain 168).